A 469-amino-acid chain; its full sequence is Gustatory receptor for sugar taste 64f (469 aa).

Over 1–117 the chain is Cytoplasmic; sequence MKILPKLERK…SFSWRNIRTC (117 aa). A helical membrane pass occupies residues 118–138; sequence FSLLFIASSLANFGLSLFKVL. The Extracellular segment spans residues 139 to 146; the sequence is NNPISFNS. A helical transmembrane segment spans residues 147–167; that stretch reads IKPIIFRGSVLLVLIVALNLA. Topologically, residues 168–199 are cytoplasmic; sequence RQWPQLMMYWHTVEKDLPQYKTQLTKWKMGHT. A helical membrane pass occupies residues 200–220; that stretch reads ISMVMLLGMMLSFAEHILSMV. Topologically, residues 221-265 are extracellular; sequence SAINYASFCNRTADPIQNYFLRTNDEIFFVTSYSTTLALWGKFQN. Asparagine 230 carries N-linked (GlcNAc...) asparagine glycosylation. The helical transmembrane segment at 266 to 286 threads the bilayer; sequence VFSTFIWNYMDLFVMIVSIGL. The Cytoplasmic portion of the chain corresponds to 287–330; it reads ASKFRQLNDDLRNFKGMNMAPSYWSERRIQYRNICILCDKMDDA. The helical transmembrane segment at 331 to 351 threads the bilayer; sequence ISLITMVSFSNNLYFICVQLL. The Extracellular segment spans residues 352–353; sequence RS. A helical membrane pass occupies residues 354–374; it reads LNTMPSVAHAVYFYFSLIFLI. At 375 to 435 the chain is on the cytoplasmic side; that stretch reads GRTLAVSLYS…GMKFFHLTRK (61 aa). The helical transmembrane segment at 436 to 456 threads the bilayer; sequence LVLSVAGTIVTYELVLIQFHE. Residues 457-469 are Extracellular-facing; it reads DNDLWDCDQSYYS.

The protein belongs to the insect chemoreceptor superfamily. Gustatory receptor (GR) family. Gr5a subfamily. Expressed in Gr5a-expressing sugar-sensing cells.

The protein resides in the cell membrane. One of the few identified sugar gustatory receptors identified so far and which promotes the starvation-induced increase of feeding motivation. Required in combination with Gr64a to detect sucrose, maltose, and glucose. The polypeptide is Gustatory receptor for sugar taste 64f (Gr64f) (Drosophila melanogaster (Fruit fly)).